The primary structure comprises 485 residues: UBX domain-containing protein 11 (485 aa).

The segment at 1 to 26 (MSSPLASLSKTRKVPLESEPVNPGRR) is disordered. Residues 67–143 (HDSELLTSMA…VGEMERFLND (77 aa)) are a coiled coil. The region spanning 224–288 (LEPIPLKLYR…VSDLRNQVYP (65 aa)) is the SEP domain. Residues 386–463 (PVPPLSMLRI…GLVPNATLLL (78 aa)) enclose the UBX domain. Ser479 and Ser483 each carry phosphoserine.

As to quaternary structure, interacts with GNA12, GNA13, RND1, RND2 and RND3. Strongly expressed in testis. Also expressed in lung, brain and thymus.

The protein resides in the cytoplasm. Its subcellular location is the cytoskeleton. Its function is as follows. May be involved in the reorganization of actin cytoskeleton mediated by RND1, RND2 and RND3. Promotes RHOA activation mediated by GNA12 and GNA13. This is UBX domain-containing protein 11 (Ubxn11) from Rattus norvegicus (Rat).